A 510-amino-acid polypeptide reads, in one-letter code: Bone morphogenetic protein 6 (510 aa).

Positions 1–20 (MPGLGRRAQWLCWWWGLLCS) are cleaved as a signal peptide. A propeptide spanning residues 21–371 (CGPPPLRPPL…VSEVHVRTTR (351 aa)) is cleaved from the precursor. 2 disordered regions span residues 87–129 (PHRP…RLKS) and 143–199 (NDDE…PLTS). Residues 106-116 (PQQQQQQQQQQ) are compositionally biased toward low complexity. N-linked (GlcNAc...) asparagine glycans are attached at residues N238, N266, N383, N401, and N451. The interval 370-402 (TRSASSRRRQQSRNRSTQSQDVSRGSGSSDYNG) is disordered. The span at 390-401 (DVSRGSGSSDYN) shows a compositional bias: polar residues. Cystine bridges form between C409-C475, C438-C507, and C442-C509.

This sequence belongs to the TGF-beta family. As to quaternary structure, interacts with SOSTDC1. Interacts (when glycosylated) with type I receptor ACVR1; the interaction may induce HAMP expression. Interacts with type II receptor ACVR2B. Interacts with Hemojuvelin/HJV. Interacts with ERFE; the interaction inhibits BMP-induced transcription of HAMP. Interacts with BMPR1A/ALK3. Forms heterodimers with BMP2 in vitro; the heterodimer then binds to its receptor BMPR1A /ALK3 and may induce HAMP expression. In terms of tissue distribution, expressed in the lung. Low levels seen in the kidney.

The protein resides in the secreted. In terms of biological role, growth factor of the TGF-beta superfamily that plays essential roles in many developmental processes including cartilage and bone formation. Also plays an important role in the regulation of HAMP/hepcidin expression and iron metabolism by acting as a ligand for hemojuvelin/HJV. Also acts to promote expression of HAMP, potentially via the interaction with its receptor BMPR1A/ALK3. Initiates the canonical BMP signaling cascade by associating with type I receptor ACVR1 and type II receptor ACVR2B. In turn, ACVR1 propagates signal by phosphorylating SMAD1/5/8 that travel to the nucleus and act as activators and repressors of transcription of target. Can also signal through non-canonical pathway such as TAZ-Hippo signaling cascade to modulate VEGF signaling by regulating VEGFR2 expression. The protein is Bone morphogenetic protein 6 (Bmp6) of Mus musculus (Mouse).